The following is a 105-amino-acid chain: Vacuolar ATPase assembly integral membrane protein VMA21 homolog (105 aa).

The disordered stretch occupies residues 1 to 26; it reads MSTKNKKAAGGNGGAPKQTRQQSHDS. Residues 1-36 are Cytoplasmic-facing; sequence MSTKNKKAAGGNGGAPKQTRQQSHDSQDYSSFKTVL. Residues 37–57 traverse the membrane as a helical segment; the sequence is FYCMLIVFLPVLTFFVLKGFV. At 58 to 68 the chain is on the lumenal side; sequence LDQFLDISEVK. A helical transmembrane segment spans residues 69–89; the sequence is VNIASAVGAVVALHIALGLYI. Residues 90–105 are Cytoplasmic-facing; that stretch reads YRAYFGAPGSKGSKTD.

It belongs to the VMA21 family.

The protein resides in the endoplasmic reticulum membrane. The protein localises to the endoplasmic reticulum-Golgi intermediate compartment membrane. It is found in the cytoplasmic vesicle. Its subcellular location is the COPII-coated vesicle membrane. Functionally, required for the assembly of the V0 complex of the vacuolar ATPase (V-ATPase) in the endoplasmic reticulum. The sequence is that of Vacuolar ATPase assembly integral membrane protein VMA21 homolog from Drosophila simulans (Fruit fly).